The sequence spans 432 residues: Adenylosuccinate synthetase (432 aa).

GTP contacts are provided by residues G13–K19 and G41–T43. D14 acts as the Proton acceptor in catalysis. Residues D14 and G41 each contribute to the Mg(2+) site. IMP-binding positions include D14–K17, N39–H42, T130, R144, Q225, T240, and R304. The Proton donor role is filled by H42. A300–R306 contacts substrate. Residues R306, K332–D334, and S415–G417 contribute to the GTP site.

The protein belongs to the adenylosuccinate synthetase family. In terms of assembly, homodimer. It depends on Mg(2+) as a cofactor.

The protein localises to the cytoplasm. The enzyme catalyses IMP + L-aspartate + GTP = N(6)-(1,2-dicarboxyethyl)-AMP + GDP + phosphate + 2 H(+). It participates in purine metabolism; AMP biosynthesis via de novo pathway; AMP from IMP: step 1/2. Its function is as follows. Plays an important role in the de novo pathway of purine nucleotide biosynthesis. Catalyzes the first committed step in the biosynthesis of AMP from IMP. The sequence is that of Adenylosuccinate synthetase from Shigella flexneri serotype 5b (strain 8401).